The sequence spans 154 residues: Large ribosomal subunit protein bL19 (154 aa).

Residues 1–33 form a disordered region; sequence MAADPKDTTVTDENTETAATAEVETVASAPTSP. Positions 16–27 are enriched in low complexity; it reads ETAATAEVETVA.

This sequence belongs to the bacterial ribosomal protein bL19 family.

This protein is located at the 30S-50S ribosomal subunit interface and may play a role in the structure and function of the aminoacyl-tRNA binding site. The chain is Large ribosomal subunit protein bL19 from Parasynechococcus marenigrum (strain WH8102).